Reading from the N-terminus, the 288-residue chain is Phosphatidylserine decarboxylase proenzyme (288 aa).

Catalysis depends on charge relay system; for autoendoproteolytic cleavage activity residues D92, H149, and S254. The active-site Schiff-base intermediate with substrate; via pyruvic acid; for decarboxylase activity is S254. The residue at position 254 (S254) is a Pyruvic acid (Ser); by autocatalysis.

This sequence belongs to the phosphatidylserine decarboxylase family. PSD-B subfamily. Prokaryotic type I sub-subfamily. In terms of assembly, heterodimer of a large membrane-associated beta subunit and a small pyruvoyl-containing alpha subunit. Requires pyruvate as cofactor. In terms of processing, is synthesized initially as an inactive proenzyme. Formation of the active enzyme involves a self-maturation process in which the active site pyruvoyl group is generated from an internal serine residue via an autocatalytic post-translational modification. Two non-identical subunits are generated from the proenzyme in this reaction, and the pyruvate is formed at the N-terminus of the alpha chain, which is derived from the carboxyl end of the proenzyme. The autoendoproteolytic cleavage occurs by a canonical serine protease mechanism, in which the side chain hydroxyl group of the serine supplies its oxygen atom to form the C-terminus of the beta chain, while the remainder of the serine residue undergoes an oxidative deamination to produce ammonia and the pyruvoyl prosthetic group on the alpha chain. During this reaction, the Ser that is part of the protease active site of the proenzyme becomes the pyruvoyl prosthetic group, which constitutes an essential element of the active site of the mature decarboxylase.

The protein localises to the cell membrane. The catalysed reaction is a 1,2-diacyl-sn-glycero-3-phospho-L-serine + H(+) = a 1,2-diacyl-sn-glycero-3-phosphoethanolamine + CO2. It functions in the pathway phospholipid metabolism; phosphatidylethanolamine biosynthesis; phosphatidylethanolamine from CDP-diacylglycerol: step 2/2. Functionally, catalyzes the formation of phosphatidylethanolamine (PtdEtn) from phosphatidylserine (PtdSer). This chain is Phosphatidylserine decarboxylase proenzyme, found in Bordetella petrii (strain ATCC BAA-461 / DSM 12804 / CCUG 43448).